The sequence spans 419 residues: Sphingomyelin phosphodiesterase 2 (419 aa).

Position 49 (glutamate 49) interacts with Mg(2+). The Proton acceptor role is filled by histidine 272. 2 helical membrane passes run 326–346 and 354–374; these read FSGYVIVWGLSLLVLLCVLAA and AIILCIPSVGLVLVAGAVYLF.

It belongs to the neutral sphingomyelinase family. Mg(2+) serves as cofactor. Although widely expressed in all tissues examined, except the spleen, high enzymatic activity occurs only in the brain.

The protein resides in the cell membrane. It carries out the reaction a sphingomyelin + H2O = phosphocholine + an N-acylsphing-4-enine + H(+). The enzyme catalyses an N-(acyl)-sphingosylphosphocholine + H2O = an N-acyl-sphingoid base + phosphocholine + H(+). The catalysed reaction is 1-O-octadecyl-sn-glycero-3-phosphocholine + H2O = 1-O-octadecyl-sn-glycerol + phosphocholine + H(+). It catalyses the reaction 1-hexadecanoyl-sn-glycero-3-phosphocholine + H2O = 1-hexadecanoyl-sn-glycerol + phosphocholine + H(+). It carries out the reaction a sphingosylphosphocholine + H2O = a sphingoid base + phosphocholine + H(+). The enzyme catalyses 1-O-hexadecyl-sn-glycero-3-phosphocholine + H2O = 1-O-hexadecyl-sn-glycerol + phosphocholine + H(+). Its pathway is lipid metabolism; sphingolipid metabolism. Its activity is regulated as follows. Activated by arachidonic acid. Functionally, catalyzes, at least in vitro, the hydrolysis of sphingomyelin to form ceramide and phosphocholine. Also hydrolyzes 1-O-alkyl-2-lyso-sn-glycero-3-phosphocholine (lyso-platelet-activating factor) in vivo. Also acts on 1-acyl-2-lyso-sn-glycero-3-phosphocholine (lyso-PC) and sphingosylphosphocholine. This chain is Sphingomyelin phosphodiesterase 2, found in Mus musculus (Mouse).